Reading from the N-terminus, the 242-residue chain is Adenosine 5'-phosphosulfate reductase (242 aa).

Positions 125, 126, 208, and 211 each coordinate [4Fe-4S] cluster. Residue C234 is the Nucleophile; cysteine thiosulfonate intermediate of the active site.

The protein belongs to the PAPS reductase family. CysH subfamily. The cofactor is [4Fe-4S] cluster.

It localises to the cytoplasm. It carries out the reaction [thioredoxin]-disulfide + sulfite + AMP + 2 H(+) = adenosine 5'-phosphosulfate + [thioredoxin]-dithiol. It functions in the pathway sulfur metabolism; hydrogen sulfide biosynthesis; sulfite from sulfate. Catalyzes the formation of sulfite from adenosine 5'-phosphosulfate (APS) using thioredoxin as an electron donor. The protein is Adenosine 5'-phosphosulfate reductase of Staphylococcus saprophyticus subsp. saprophyticus (strain ATCC 15305 / DSM 20229 / NCIMB 8711 / NCTC 7292 / S-41).